The sequence spans 161 residues: Nucleotide-binding protein Bd0338 (161 aa).

This sequence belongs to the YajQ family.

Nucleotide-binding protein. This is Nucleotide-binding protein Bd0338 from Bdellovibrio bacteriovorus (strain ATCC 15356 / DSM 50701 / NCIMB 9529 / HD100).